We begin with the raw amino-acid sequence, 362 residues long: Peptide chain release factor 1 (362 aa).

The residue at position 235 (Gln235) is an N5-methylglutamine.

It belongs to the prokaryotic/mitochondrial release factor family. Post-translationally, methylated by PrmC. Methylation increases the termination efficiency of RF1.

The protein localises to the cytoplasm. Peptide chain release factor 1 directs the termination of translation in response to the peptide chain termination codons UAG and UAA. This is Peptide chain release factor 1 from Acinetobacter baylyi (strain ATCC 33305 / BD413 / ADP1).